Here is a 178-residue protein sequence, read N- to C-terminus: Large ribosomal subunit protein bL25 (178 aa).

This sequence belongs to the bacterial ribosomal protein bL25 family. CTC subfamily. As to quaternary structure, part of the 50S ribosomal subunit; part of the 5S rRNA/L5/L18/L25 subcomplex. Contacts the 5S rRNA. Binds to the 5S rRNA independently of L5 and L18.

In terms of biological role, this is one of the proteins that binds to the 5S RNA in the ribosome where it forms part of the central protuberance. This Helicobacter pylori (strain Shi470) protein is Large ribosomal subunit protein bL25.